Here is a 92-residue protein sequence, read N- to C-terminus: Probable Fe(2+)-trafficking protein (92 aa).

Belongs to the Fe(2+)-trafficking protein family.

Functionally, could be a mediator in iron transactions between iron acquisition and iron-requiring processes, such as synthesis and/or repair of Fe-S clusters in biosynthetic enzymes. This Shewanella sp. (strain W3-18-1) protein is Probable Fe(2+)-trafficking protein.